Consider the following 39-residue polypeptide: Photosystem II reaction center protein L (39 aa).

The chain crosses the membrane as a helical span at residues 18–38 (SLYLGLLFVFVTGVLMSSYFF).

Belongs to the PsbL family. In terms of assembly, PSII is composed of 1 copy each of membrane proteins PsbA, PsbB, PsbC, PsbD, PsbE, PsbF, PsbH, PsbI, PsbJ, PsbK, PsbL, PsbM, PsbT, PsbX, PsbY, PsbZ, Psb30/Ycf12, peripheral proteins PsbO, CyanoQ (PsbQ), PsbU, PsbV and a large number of cofactors. It forms dimeric complexes.

The protein resides in the cellular thylakoid membrane. One of the components of the core complex of photosystem II (PSII). PSII is a light-driven water:plastoquinone oxidoreductase that uses light energy to abstract electrons from H(2)O, generating O(2) and a proton gradient subsequently used for ATP formation. It consists of a core antenna complex that captures photons, and an electron transfer chain that converts photonic excitation into a charge separation. This subunit is found at the monomer-monomer interface and is required for correct PSII assembly and/or dimerization. In Parasynechococcus marenigrum (strain WH8102), this protein is Photosystem II reaction center protein L.